The sequence spans 201 residues: Potassium-transporting ATPase KdpC subunit (201 aa).

Residues 13–33 (IIFMIFTILCGGIYTIFITGI) traverse the membrane as a helical segment.

The protein belongs to the KdpC family. As to quaternary structure, the system is composed of three essential subunits: KdpA, KdpB and KdpC.

Its subcellular location is the cell membrane. Its function is as follows. Part of the high-affinity ATP-driven potassium transport (or Kdp) system, which catalyzes the hydrolysis of ATP coupled with the electrogenic transport of potassium into the cytoplasm. This subunit acts as a catalytic chaperone that increases the ATP-binding affinity of the ATP-hydrolyzing subunit KdpB by the formation of a transient KdpB/KdpC/ATP ternary complex. This Clostridium botulinum (strain Eklund 17B / Type B) protein is Potassium-transporting ATPase KdpC subunit.